The following is a 588-amino-acid chain: Disabled homolog 1 (588 aa).

The interval 1–26 is disordered; it reads MSTETELQVAVKTSAKKDSRKKGQDR. Positions 15–26 are enriched in basic and acidic residues; the sequence is AKKDSRKKGQDR. The region spanning 36–189 is the PID domain; it reads KGEGVRYKAK…CEQAVYQTIL (154 aa). A phosphotyrosine mark is found at tyrosine 198, tyrosine 220, and tyrosine 232. Disordered regions lie at residues 417–443, 451–470, and 502–588; these read LTPL…RQKM, FQMA…PSLT, and LTPV…QAGS. Polar residues predominate over residues 424-436; the sequence is PGTSDSTRSSPQT. Low complexity-rich tracts occupy residues 503 to 512 and 520 to 534; these read TPVTSTTPST and PRQS…SHAS. Residue serine 524 is modified to Phosphoserine; by CDK5. The span at 537 to 546 shows a compositional bias: acidic residues; sequence TTDDIFEEGF.

Associates with the SH2 domains of SRC, FYN and ABL. Interacts (phosphorylated on tyrosine residues) with CRK and CRKL (via respective SH2 domain). Interacts with SIAH1, LRP8 and VLDLR. Interacts with LRP1. Interacts with APLP1 (via NPXY motif). Interacts with DAB2IP. Interacts with ZSWIM8. Post-translationally, phosphorylated by FYN on Tyr-198 and Tyr-220 upon reelin induction in embryonic neurons. Also phosphorylated on Ser-524 independently of reelin signaling. In terms of processing, ubiquitinated by various cullin-5-RING E3 ubiquitin-protein ligase complexes (ECS complexes) following ligand-binding and phosphorylation, leading to its degradation. Ubiquitinated by the ECS(SOCS7) complex in the cortical plate of the developing cerebral cortex following ligand-binding and phosphorylation by FYN, leading to its degradation by the proteasome. Recognized by ZSWIM8 through a disorder targets misorder mechanism that eliminates misfolded DAB1 via ubiquitination and proteasomal degradation. As to expression, mainly expressed in brain.

It is found in the cytoplasm. In terms of biological role, signaling adapter of the reelin-mediated signaling pathway, which regulates the migration and differentiation of postmitotic neurons during brain development. Mediates intracellular transduction of Reelin signaling following reelin (RELN)-binding to its receptor: acts by docking proteins through its phosphotyrosine residues and PID domain. This chain is Disabled homolog 1 (DAB1), found in Homo sapiens (Human).